The primary structure comprises 306 residues: Serine/threonine-protein phosphatase 2A catalytic subunit A (306 aa).

D54, H56, D82, and N114 together coordinate Mn(2+). H115 acts as the Proton donor in catalysis. The Mn(2+) site is built by H164 and H238. The residue at position 306 (L306) is a Leucine methyl ester.

It belongs to the PPP phosphatase family. PP-2A subfamily. As to quaternary structure, PP2A consists of a trimeric holoenzyme, composed of a 37 kDa catalytic subunit (C subunit) and a 65 kDa constant regulatory subunit (A subunit), that associates with a variety of regulatory subunits (B subunit) such as phr2AB (B55) and psrA (B56 homolog). The trimer may partially dissociates into a core 'AC' dimer equally active compared to the trimer. Mn(2+) serves as cofactor. Post-translationally, reversibly methyl esterified on Leu-306 by leucine carboxyl methyltransferase 1 (LCMT) and protein phosphatase methylesterase 1 (PPME1). Carboxyl methylation influences the affinity of the catalytic subunit for the different regulatory subunits, thereby modulating the PP2A holoenzyme's substrate specificity, enzyme activity and cellular localization.

It is found in the cytoplasm. The protein localises to the cytosol. It localises to the nucleus speckle. It catalyses the reaction O-phospho-L-seryl-[protein] + H2O = L-seryl-[protein] + phosphate. The enzyme catalyses O-phospho-L-threonyl-[protein] + H2O = L-threonyl-[protein] + phosphate. Plays a role in activating the myosin contractile function. Dephosphorylates threonine at 'Thr-1823', 'Thr-1833' and 'Thr-2029' in the C-terminal tail region of myosin II heavy chain (mhcA). Drives the assembly of dephosphorylated myosin II filaments to allow myosin recruitment into the cytoskeleton. This is Serine/threonine-protein phosphatase 2A catalytic subunit A (pho2a) from Dictyostelium discoideum (Social amoeba).